Consider the following 466-residue polypeptide: Glycylpeptide N-tetradecanoyltransferase (466 aa).

The disordered stretch occupies residues 1 to 21 (MDNENNKNTKNSQQDSSFSEG). A compositionally biased stretch (polar residues) spans 8–19 (NTKNSQQDSSFS). The residue at position 17 (S17) is a Phosphoserine. Residues 51–54 (FKFW), 185–187 (LCI), and 193–197 (SKRLT) each bind tetradecanoyl-CoA. The active-site Proton acceptor; via carboxylate is I466.

Belongs to the NMT family. Monomer.

It localises to the cytoplasm. It catalyses the reaction N-terminal glycyl-[protein] + tetradecanoyl-CoA = N-tetradecanoylglycyl-[protein] + CoA + H(+). In terms of biological role, adds a myristoyl group to the N-terminal glycine residue of certain cellular proteins. The chain is Glycylpeptide N-tetradecanoyltransferase (nmt1) from Schizosaccharomyces pombe (strain 972 / ATCC 24843) (Fission yeast).